The chain runs to 212 residues: Ribosomal RNA small subunit methyltransferase G (212 aa).

S-adenosyl-L-methionine is bound by residues Gly-80, Leu-85, 131 to 132 (AE), and Arg-146.

It belongs to the methyltransferase superfamily. RNA methyltransferase RsmG family.

The protein localises to the cytoplasm. It catalyses the reaction guanosine(527) in 16S rRNA + S-adenosyl-L-methionine = N(7)-methylguanosine(527) in 16S rRNA + S-adenosyl-L-homocysteine. Specifically methylates the N7 position of guanine in position 527 of 16S rRNA. This is Ribosomal RNA small subunit methyltransferase G from Xanthomonas oryzae pv. oryzae (strain MAFF 311018).